The chain runs to 453 residues: Bifunctional protein GlmU (453 aa).

Positions 1–226 are pyrophosphorylase; sequence MFAIAILAAG…IDEVSGVNDR (226 aa). Residues 7 to 10, lysine 21, glutamine 73, and 78 to 79 contribute to the UDP-N-acetyl-alpha-D-glucosamine site; these read LAAG and GT. Aspartate 103 provides a ligand contact to Mg(2+). UDP-N-acetyl-alpha-D-glucosamine contacts are provided by glycine 140, glutamate 155, asparagine 170, and asparagine 224. Asparagine 224 serves as a coordination point for Mg(2+). A linker region spans residues 227–247; that stretch reads AQLANCENLIQQSLRNHWMSK. Residues 248 to 453 are N-acetyltransferase; it reads GVSFIDPESC…NWKTREETNQ (206 aa). Arginine 329 and lysine 347 together coordinate UDP-N-acetyl-alpha-D-glucosamine. The Proton acceptor role is filled by histidine 359. The UDP-N-acetyl-alpha-D-glucosamine site is built by tyrosine 362 and asparagine 373. Alanine 376, alanine 419, and arginine 436 together coordinate acetyl-CoA.

The protein in the N-terminal section; belongs to the N-acetylglucosamine-1-phosphate uridyltransferase family. In the C-terminal section; belongs to the transferase hexapeptide repeat family. In terms of assembly, homotrimer. The cofactor is Mg(2+).

The protein localises to the cytoplasm. It carries out the reaction alpha-D-glucosamine 1-phosphate + acetyl-CoA = N-acetyl-alpha-D-glucosamine 1-phosphate + CoA + H(+). It catalyses the reaction N-acetyl-alpha-D-glucosamine 1-phosphate + UTP + H(+) = UDP-N-acetyl-alpha-D-glucosamine + diphosphate. It participates in nucleotide-sugar biosynthesis; UDP-N-acetyl-alpha-D-glucosamine biosynthesis; N-acetyl-alpha-D-glucosamine 1-phosphate from alpha-D-glucosamine 6-phosphate (route II): step 2/2. It functions in the pathway nucleotide-sugar biosynthesis; UDP-N-acetyl-alpha-D-glucosamine biosynthesis; UDP-N-acetyl-alpha-D-glucosamine from N-acetyl-alpha-D-glucosamine 1-phosphate: step 1/1. The protein operates within bacterial outer membrane biogenesis; LPS lipid A biosynthesis. Its function is as follows. Catalyzes the last two sequential reactions in the de novo biosynthetic pathway for UDP-N-acetylglucosamine (UDP-GlcNAc). The C-terminal domain catalyzes the transfer of acetyl group from acetyl coenzyme A to glucosamine-1-phosphate (GlcN-1-P) to produce N-acetylglucosamine-1-phosphate (GlcNAc-1-P), which is converted into UDP-GlcNAc by the transfer of uridine 5-monophosphate (from uridine 5-triphosphate), a reaction catalyzed by the N-terminal domain. This Prochlorococcus marinus (strain MIT 9211) protein is Bifunctional protein GlmU.